We begin with the raw amino-acid sequence, 159 residues long: Cytochrome c-type biogenesis protein CcmE (159 aa).

Residues 1 to 8 lie on the Cytoplasmic side of the membrane; the sequence is MNLRRKNR. Residues 9–29 form a helical; Signal-anchor for type II membrane protein membrane-spanning segment; sequence LWVVCAVLAGLALTTALVLYA. Residues 30–159 lie on the Periplasmic side of the membrane; it reads LRANIDLFYT…PQRADKDTSS (130 aa). The disordered stretch occupies residues 129 to 159; that stretch reads KHDENYTPPEVEKAMQENHRRPQRADKDTSS. His-130 and Tyr-134 together coordinate heme.

The protein belongs to the CcmE/CycJ family.

It localises to the cell inner membrane. Its function is as follows. Heme chaperone required for the biogenesis of c-type cytochromes. Transiently binds heme delivered by CcmC and transfers the heme to apo-cytochromes in a process facilitated by CcmF and CcmH. This Salmonella paratyphi A (strain ATCC 9150 / SARB42) protein is Cytochrome c-type biogenesis protein CcmE.